The following is a 156-amino-acid chain: Ribosomal RNA large subunit methyltransferase H (156 aa).

Residues L73, G104, and 123–128 (LGALTL) each bind S-adenosyl-L-methionine.

The protein belongs to the RNA methyltransferase RlmH family. Homodimer.

It localises to the cytoplasm. The catalysed reaction is pseudouridine(1915) in 23S rRNA + S-adenosyl-L-methionine = N(3)-methylpseudouridine(1915) in 23S rRNA + S-adenosyl-L-homocysteine + H(+). Its function is as follows. Specifically methylates the pseudouridine at position 1915 (m3Psi1915) in 23S rRNA. The chain is Ribosomal RNA large subunit methyltransferase H from Dichelobacter nodosus (strain VCS1703A).